Here is a 192-residue protein sequence, read N- to C-terminus: GTP cyclohydrolase-2 (192 aa).

A GTP-binding site is contributed by 50–54; sequence RLHSE. Positions 55, 66, and 68 each coordinate Zn(2+). GTP-binding positions include 92–94 and Thr-114; that span reads EGR. Asp-126 (proton acceptor) is an active-site residue. Arg-128 (nucleophile) is an active-site residue. The GTP site is built by Thr-149 and Lys-154.

Belongs to the GTP cyclohydrolase II family. It depends on Zn(2+) as a cofactor.

The enzyme catalyses GTP + 4 H2O = 2,5-diamino-6-hydroxy-4-(5-phosphoribosylamino)-pyrimidine + formate + 2 phosphate + 3 H(+). It participates in cofactor biosynthesis; riboflavin biosynthesis; 5-amino-6-(D-ribitylamino)uracil from GTP: step 1/4. Functionally, catalyzes the conversion of GTP to 2,5-diamino-6-ribosylamino-4(3H)-pyrimidinone 5'-phosphate (DARP), formate and pyrophosphate. The protein is GTP cyclohydrolase-2 of Helicobacter pylori (strain Shi470).